The chain runs to 225 residues: Ribonuclease HII (225 aa).

Positions 35–225 (GLVAGVDEVG…SFRPCQISLD (191 aa)) constitute an RNase H type-2 domain. A divalent metal cation is bound by residues D41, E42, and D137.

The protein belongs to the RNase HII family. It depends on Mn(2+) as a cofactor. Requires Mg(2+) as cofactor.

Its subcellular location is the cytoplasm. The catalysed reaction is Endonucleolytic cleavage to 5'-phosphomonoester.. Its function is as follows. Endonuclease that specifically degrades the RNA of RNA-DNA hybrids. The polypeptide is Ribonuclease HII (Trichormus variabilis (strain ATCC 29413 / PCC 7937) (Anabaena variabilis)).